A 318-amino-acid chain; its full sequence is L-lactate dehydrogenase (318 aa).

Residues Val-17, Asp-38, Lys-43, Tyr-69, and 83–84 (GA) each bind NAD(+). Substrate-binding residues include Gln-86 and Arg-92. Residues Ser-105, 122–124 (ATN), and Ser-147 each bind NAD(+). 124 to 127 (NPVD) lines the substrate pocket. A substrate-binding site is contributed by 152–155 (DTAR). The beta-D-fructose 1,6-bisphosphate site is built by Lys-157 and His-172. The active-site Proton acceptor is the His-179. Phosphotyrosine is present on Tyr-223. Thr-232 is a substrate binding site.

Belongs to the LDH/MDH superfamily. LDH family. As to quaternary structure, homotetramer.

Its subcellular location is the cytoplasm. The enzyme catalyses (S)-lactate + NAD(+) = pyruvate + NADH + H(+). The protein operates within fermentation; pyruvate fermentation to lactate; (S)-lactate from pyruvate: step 1/1. Allosterically activated by fructose 1,6-bisphosphate (FBP). Functionally, catalyzes the conversion of lactate to pyruvate. This is L-lactate dehydrogenase from Staphylococcus saprophyticus subsp. saprophyticus (strain ATCC 15305 / DSM 20229 / NCIMB 8711 / NCTC 7292 / S-41).